The chain runs to 322 residues: Zinc finger C2HC domain-containing protein CBG14627 (322 aa).

C2HC/C3H-type zinc fingers lie at residues 9-38 and 119-148; these read PVYP…LATL and DYVQ…QTTR. Zn(2+) is bound by residues cysteine 13, cysteine 16, histidine 28, cysteine 32, cysteine 123, cysteine 126, histidine 138, and cysteine 142. The tract at residues 144–322 is disordered; the sequence is EQTTRKQGGK…SRNNSRSRIF (179 aa). Polar residues predominate over residues 148 to 168; it reads RKQGGKSSAGNRGLTSNNYRS. Residues 171–219 show a composition bias toward basic and acidic residues; it reads SKHEGRKQESSSRNGSAERKTTTRGRDGSLSRARRDDSNDLTNRRKSLE. The span at 220–238 shows a compositional bias: polar residues; the sequence is TRSQLTTGQANNRTTSLSA. Low complexity predominate over residues 278–294; that stretch reads TTTTASASRSGSGSSSR. Residues 296–305 show a composition bias toward basic and acidic residues; the sequence is RTRDESRESR. The segment covering 311–322 has biased composition (low complexity); it reads SNSRNNSRSRIF.

It belongs to the ZC2HC1 family. The cofactor is Zn(2+).

In Caenorhabditis briggsae, this protein is Zinc finger C2HC domain-containing protein CBG14627.